Consider the following 191-residue polypeptide: GDP-mannose pyrophosphatase (191 aa).

GDP-alpha-D-mannose-binding positions include Tyr17, 38-40 (KRE), Arg67, and 85-87 (AGL). In terms of domain architecture, Nudix hydrolase spans 43–180 (DRGNGATILL…EIRDGKTVLL (138 aa)). Residues Ala85, Glu100, and Glu104 each contribute to the Mg(2+) site. The Nudix box motif lies at 86-106 (GLLDNDEPEVCIRKEAIEETG). GDP-alpha-D-mannose is bound by residues Glu104, Glu127, 150–151 (DE), and Lys176. Position 151 (Glu151) interacts with Mg(2+).

The protein belongs to the Nudix hydrolase family. NudK subfamily. Homodimer. Requires Mg(2+) as cofactor.

The catalysed reaction is GDP-alpha-D-mannose + H2O = alpha-D-mannose 1-phosphate + GMP + 2 H(+). Its function is as follows. Nucleoside diphosphate sugar hydrolase that hydrolyzes GDP-mannose as its preferred substrate, yielding GMP and mannose-1-phosphate. The polypeptide is GDP-mannose pyrophosphatase (nudK) (Salmonella arizonae (strain ATCC BAA-731 / CDC346-86 / RSK2980)).